The following is an 874-amino-acid chain: Leucine--tRNA ligase (874 aa).

The short motif at 43–53 (PYPSGRIHIGH) is the 'HIGH' region element. Positions 614–634 (LDDGSPVTVGPPEKMSKSKKN) are disordered. Positions 627–631 (KMSKS) match the 'KMSKS' region motif. ATP is bound at residue lysine 630.

Belongs to the class-I aminoacyl-tRNA synthetase family.

It is found in the cytoplasm. The catalysed reaction is tRNA(Leu) + L-leucine + ATP = L-leucyl-tRNA(Leu) + AMP + diphosphate. The chain is Leucine--tRNA ligase from Azorhizobium caulinodans (strain ATCC 43989 / DSM 5975 / JCM 20966 / LMG 6465 / NBRC 14845 / NCIMB 13405 / ORS 571).